We begin with the raw amino-acid sequence, 209 residues long: Imidazoleglycerol-phosphate dehydratase (209 aa).

The protein belongs to the imidazoleglycerol-phosphate dehydratase family.

The protein localises to the cytoplasm. It catalyses the reaction D-erythro-1-(imidazol-4-yl)glycerol 3-phosphate = 3-(imidazol-4-yl)-2-oxopropyl phosphate + H2O. It functions in the pathway amino-acid biosynthesis; L-histidine biosynthesis; L-histidine from 5-phospho-alpha-D-ribose 1-diphosphate: step 6/9. The chain is Imidazoleglycerol-phosphate dehydratase from Prochlorococcus marinus (strain MIT 9313).